Here is a 280-residue protein sequence, read N- to C-terminus: 4-diphosphocytidyl-2-C-methyl-D-erythritol kinase (280 aa).

Lysine 8 is an active-site residue. Position 91-101 (91-101) interacts with ATP; sequence PVAAGLAGGST. Aspartate 133 is an active-site residue.

This sequence belongs to the GHMP kinase family. IspE subfamily.

The catalysed reaction is 4-CDP-2-C-methyl-D-erythritol + ATP = 4-CDP-2-C-methyl-D-erythritol 2-phosphate + ADP + H(+). It functions in the pathway isoprenoid biosynthesis; isopentenyl diphosphate biosynthesis via DXP pathway; isopentenyl diphosphate from 1-deoxy-D-xylulose 5-phosphate: step 3/6. Functionally, catalyzes the phosphorylation of the position 2 hydroxy group of 4-diphosphocytidyl-2C-methyl-D-erythritol. The sequence is that of 4-diphosphocytidyl-2-C-methyl-D-erythritol kinase from Clostridium botulinum (strain 657 / Type Ba4).